We begin with the raw amino-acid sequence, 187 residues long: UPF0301 protein YqgE (187 aa).

This sequence belongs to the UPF0301 (AlgH) family.

The chain is UPF0301 protein YqgE from Escherichia fergusonii (strain ATCC 35469 / DSM 13698 / CCUG 18766 / IAM 14443 / JCM 21226 / LMG 7866 / NBRC 102419 / NCTC 12128 / CDC 0568-73).